A 290-amino-acid chain; its full sequence is HTH-type transcriptional activator RhaR (290 aa).

The region spanning 179-277 (DLIMSALQQS…GMTPRDYRQR (99 aa)) is the HTH araC/xylS-type domain. DNA-binding regions (H-T-H motif) lie at residues 196–217 (ADFC…RQQT) and 244–267 (ISDI…TREA).

In terms of assembly, binds DNA as a dimer.

It localises to the cytoplasm. In terms of biological role, activates expression of the rhaSR operon in response to L-rhamnose. The protein is HTH-type transcriptional activator RhaR of Yersinia pestis bv. Antiqua (strain Antiqua).